A 775-amino-acid chain; its full sequence is Transcription activator of gluconeogenesis HCBG_00867 (775 aa).

Residues 1–70 (MTASTQNGSP…NAKDPLRPRR (70 aa)) are disordered. Polar residues-rich tracts occupy residues 21-41 (NQESKNMTANPADASESQSPA) and 48-60 (TAESGQKHTSTAA). A DNA-binding region (zn(2)-C6 fungal-type) is located at residues 77–105 (CFACQRAHLTCGDERPCQRCIKRGLQDAC). Disordered stretches follow at residues 179 to 248 (TQAK…PFGA), 286 to 351 (GAGD…NIYN), 556 to 592 (NLNVNTGGSSPRGSGTFTPRNGNGVDPHSGMSAAGGG), and 649 to 725 (QGKE…SPKQ). Residues 195-217 (MQDTSINPSAFQAPSPTSTPNFD) are compositionally biased toward polar residues. A compositionally biased stretch (low complexity) spans 218 to 229 (LSSNPPNRNLSS). Polar residues-rich tracts occupy residues 230 to 244 (AMTQTPSSASNQTQD), 292 to 323 (PSDSATQRGSIGRSSGTFTAQNFGDSTNTQSP), 334 to 351 (WNPSGQSQTNPRNNNIYN), and 557 to 576 (LNVNTGGSSPRGSGTFTPRN). Gly residues predominate over residues 657–668 (GSDGKGGGGGGD). The span at 669 to 713 (VAATAATTSTSTSNGANSSGHANANRNNTNPKNSSPPSSSSAAAA) shows a compositional bias: low complexity.

The protein belongs to the ERT1/acuK family.

The protein localises to the nucleus. In terms of biological role, transcription factor which regulates nonfermentable carbon utilization. Activator of gluconeogenetic genes. The polypeptide is Transcription activator of gluconeogenesis HCBG_00867 (Ajellomyces capsulatus (strain G186AR / H82 / ATCC MYA-2454 / RMSCC 2432) (Darling's disease fungus)).